A 130-amino-acid polypeptide reads, in one-letter code: Methylglyoxal synthase (130 aa).

An MGS-like domain is found at 1–130; that stretch reads MSKPRIALIA…DLARNMQDVC (130 aa). Substrate is bound by residues histidine 11, lysine 15, 37-40, and 57-58; these read TGTT and SG. Aspartate 63 acts as the Proton donor/acceptor in catalysis. Histidine 90 serves as a coordination point for substrate.

The protein belongs to the methylglyoxal synthase family.

The catalysed reaction is dihydroxyacetone phosphate = methylglyoxal + phosphate. In terms of biological role, catalyzes the formation of methylglyoxal from dihydroxyacetone phosphate. In Burkholderia lata (strain ATCC 17760 / DSM 23089 / LMG 22485 / NCIMB 9086 / R18194 / 383), this protein is Methylglyoxal synthase.